We begin with the raw amino-acid sequence, 331 residues long: Sucrose operon repressor (331 aa).

Residues 1-56 (MASLKDVARLAGVSMMTVSRVMHNAESVRPATRDRVLQAIQTLNYVPDLSARKMRA) enclose the HTH lacI-type domain. The segment at residues 4 to 23 (LKDVARLAGVSMMTVSRVMH) is a DNA-binding region (H-T-H motif).

Repressor for the csc operon. Binds D-fructose as an inducer. The sequence is that of Sucrose operon repressor (cscR) from Escherichia coli.